The chain runs to 324 residues: Galactosylgalactosylxylosylprotein 3-beta-glucuronosyltransferase 2 (324 aa).

At 1 to 2 the chain is on the cytoplasmic side; it reads MK. Residues 3 to 23 traverse the membrane as a helical; Signal-anchor for type II membrane protein segment; sequence SALCSRFFILLPWILIVIIML. The Lumenal segment spans residues 24–324; the sequence is DVDPRRPAPQ…YHLDTVNIEV (301 aa). The tract at residues 50–78 is disordered; sequence SRVPLRRSSPGRDAAEKRNESRPQLQPEP. N-linked (GlcNAc...) asparagine glycosylation is present at asparagine 68. UDP-alpha-D-glucuronate-binding positions include 88–90, aspartate 119, arginine 156, arginine 161, and 186–188; these read PTY and DDD. A Mn(2+)-binding site is contributed by aspartate 188. Positions 235-244 are interaction with galactose moiety of substrate glycoprotein; it reads WREDRPFAID. The Proton donor/acceptor role is filled by glutamate 274. An N-linked (GlcNAc...) asparagine glycan is attached at asparagine 293. 301 to 303 contacts UDP-alpha-D-glucuronate; sequence HTR.

Belongs to the glycosyltransferase 43 family. Homodimer. The cofactor is Mn(2+). Expressed in brain, but not in liver and kidney.

Its subcellular location is the golgi apparatus membrane. It carries out the reaction 3-O-(beta-D-galactosyl-(1-&gt;3)-beta-D-galactosyl-(1-&gt;4)-beta-D-xylosyl)-L-seryl-[protein] + UDP-alpha-D-glucuronate = 3-O-(beta-D-GlcA-(1-&gt;3)-beta-D-Gal-(1-&gt;3)-beta-D-Gal-(1-&gt;4)-beta-D-Xyl)-L-seryl-[protein] + UDP + H(+). The protein operates within protein modification; protein glycosylation. Functionally, involved in the biosynthesis of L2/HNK-1 carbohydrate epitope on both glycolipids and glycoproteins. This is Galactosylgalactosylxylosylprotein 3-beta-glucuronosyltransferase 2 (B3gat2) from Mus musculus (Mouse).